The following is a 1072-amino-acid chain: Carbamoyl phosphate synthase large chain (1072 aa).

Positions 1-401 (MPKRLDINTI…SLLKAVRSLE (401 aa)) are carboxyphosphate synthetic domain. Residues R129, R169, G175, G176, K208, I210, E215, G241, V242, H243, Q284, and E298 each coordinate ATP. An ATP-grasp 1 domain is found at 133–327 (RTLMQDLNEP…IAKLAAKIAV (195 aa)). 3 residues coordinate Mg(2+): Q284, E298, and N300. Mn(2+)-binding residues include Q284, E298, and N300. Residues 402–546 (LGIYHLELDH…YSTYADENES (145 aa)) are oligomerization domain. The interval 547–929 (IVTDRKSVVV…ALYKGLVASG (383 aa)) is carbamoyl phosphate synthetic domain. The region spanning 671 to 861 (EAALTKLGIP…MANVATKVIL (191 aa)) is the ATP-grasp 2 domain. Residues R707, R746, E752, G777, V778, H779, S780, Q820, and E832 each contribute to the ATP site. Mg(2+)-binding residues include Q820, E832, and N834. Residues Q820, E832, and N834 each contribute to the Mn(2+) site. The MGS-like domain occupies 930–1072 (INIPTHGSVI…QTKRHEVVHA (143 aa)). The allosteric domain stretch occupies residues 930-1072 (INIPTHGSVI…QTKRHEVVHA (143 aa)).

The protein belongs to the CarB family. As to quaternary structure, composed of two chains; the small (or glutamine) chain promotes the hydrolysis of glutamine to ammonia, which is used by the large (or ammonia) chain to synthesize carbamoyl phosphate. Tetramer of heterodimers (alpha,beta)4. It depends on Mg(2+) as a cofactor. Mn(2+) is required as a cofactor.

It carries out the reaction hydrogencarbonate + L-glutamine + 2 ATP + H2O = carbamoyl phosphate + L-glutamate + 2 ADP + phosphate + 2 H(+). The enzyme catalyses hydrogencarbonate + NH4(+) + 2 ATP = carbamoyl phosphate + 2 ADP + phosphate + 2 H(+). Its pathway is amino-acid biosynthesis; L-arginine biosynthesis; carbamoyl phosphate from bicarbonate: step 1/1. It participates in pyrimidine metabolism; UMP biosynthesis via de novo pathway; (S)-dihydroorotate from bicarbonate: step 1/3. In terms of biological role, large subunit of the glutamine-dependent carbamoyl phosphate synthetase (CPSase). CPSase catalyzes the formation of carbamoyl phosphate from the ammonia moiety of glutamine, carbonate, and phosphate donated by ATP, constituting the first step of 2 biosynthetic pathways, one leading to arginine and/or urea and the other to pyrimidine nucleotides. The large subunit (synthetase) binds the substrates ammonia (free or transferred from glutamine from the small subunit), hydrogencarbonate and ATP and carries out an ATP-coupled ligase reaction, activating hydrogencarbonate by forming carboxy phosphate which reacts with ammonia to form carbamoyl phosphate. The polypeptide is Carbamoyl phosphate synthase large chain (Bacillus cereus (strain B4264)).